We begin with the raw amino-acid sequence, 426 residues long: Dihydroorotase (426 aa).

2 residues coordinate Zn(2+): His-58 and His-60. Substrate contacts are provided by residues 60–62 (HLR) and Asn-92. Positions 150, 177, and 230 each coordinate Zn(2+). Asn-276 contributes to the substrate binding site. Asp-303 is a Zn(2+) binding site. Residue Asp-303 is part of the active site. Residues His-307 and 321–322 (FG) each bind substrate.

The protein belongs to the metallo-dependent hydrolases superfamily. DHOase family. Class I DHOase subfamily. Zn(2+) serves as cofactor.

The enzyme catalyses (S)-dihydroorotate + H2O = N-carbamoyl-L-aspartate + H(+). The protein operates within pyrimidine metabolism; UMP biosynthesis via de novo pathway; (S)-dihydroorotate from bicarbonate: step 3/3. Functionally, catalyzes the reversible cyclization of carbamoyl aspartate to dihydroorotate. In Listeria monocytogenes serotype 4b (strain CLIP80459), this protein is Dihydroorotase.